Consider the following 138-residue polypeptide: 6,7-dimethyl-8-ribityllumazine synthase (138 aa).

Residues F13, 45–47, and 69–71 each bind 5-amino-6-(D-ribitylamino)uracil; these read VFD and AVI. 74-75 serves as a coordination point for (2S)-2-hydroxy-3-oxobutyl phosphate; the sequence is AT. H77 acts as the Proton donor in catalysis. Residue L102 participates in 5-amino-6-(D-ribitylamino)uracil binding. A (2S)-2-hydroxy-3-oxobutyl phosphate-binding site is contributed by R117.

It belongs to the DMRL synthase family.

The enzyme catalyses (2S)-2-hydroxy-3-oxobutyl phosphate + 5-amino-6-(D-ribitylamino)uracil = 6,7-dimethyl-8-(1-D-ribityl)lumazine + phosphate + 2 H2O + H(+). Its pathway is cofactor biosynthesis; riboflavin biosynthesis; riboflavin from 2-hydroxy-3-oxobutyl phosphate and 5-amino-6-(D-ribitylamino)uracil: step 1/2. In terms of biological role, catalyzes the formation of 6,7-dimethyl-8-ribityllumazine by condensation of 5-amino-6-(D-ribitylamino)uracil with 3,4-dihydroxy-2-butanone 4-phosphate. This is the penultimate step in the biosynthesis of riboflavin. This is 6,7-dimethyl-8-ribityllumazine synthase from Methanobrevibacter smithii (strain ATCC 35061 / DSM 861 / OCM 144 / PS).